Reading from the N-terminus, the 649-residue chain is Threonine--tRNA ligase (649 aa).

Residues 1-63 enclose the TGS domain; it reads MSSIKITFPD…KEDGSIEIIT (63 aa). The catalytic stretch occupies residues 245–543; the sequence is DHRVIGNELD…LTEMYKGAFP (299 aa). Residues C339, H390, and H520 each contribute to the Zn(2+) site.

Belongs to the class-II aminoacyl-tRNA synthetase family. In terms of assembly, homodimer. Zn(2+) serves as cofactor.

Its subcellular location is the cytoplasm. The enzyme catalyses tRNA(Thr) + L-threonine + ATP = L-threonyl-tRNA(Thr) + AMP + diphosphate + H(+). Functionally, catalyzes the attachment of threonine to tRNA(Thr) in a two-step reaction: L-threonine is first activated by ATP to form Thr-AMP and then transferred to the acceptor end of tRNA(Thr). Also edits incorrectly charged L-seryl-tRNA(Thr). This is Threonine--tRNA ligase from Ligilactobacillus salivarius (strain UCC118) (Lactobacillus salivarius).